A 428-amino-acid chain; its full sequence is Adenylosuccinate synthetase (428 aa).

Residues 12-18 (GDEGKGK) and 40-42 (GHT) contribute to the GTP site. Asp-13 (proton acceptor) is an active-site residue. Residues Asp-13 and Gly-40 each contribute to the Mg(2+) site. IMP contacts are provided by residues 13–16 (DEGK), 38–41 (NAGH), Thr-128, Arg-142, Gln-222, Thr-237, and Arg-301. His-41 functions as the Proton donor in the catalytic mechanism. A substrate-binding site is contributed by 297–303 (TVTGRSR). Residues Arg-303, 329–331 (KLD), and 411–413 (STS) each bind GTP.

It belongs to the adenylosuccinate synthetase family. In terms of assembly, homodimer. Requires Mg(2+) as cofactor.

Its subcellular location is the cytoplasm. The enzyme catalyses IMP + L-aspartate + GTP = N(6)-(1,2-dicarboxyethyl)-AMP + GDP + phosphate + 2 H(+). The protein operates within purine metabolism; AMP biosynthesis via de novo pathway; AMP from IMP: step 1/2. Plays an important role in the de novo pathway of purine nucleotide biosynthesis. Catalyzes the first committed step in the biosynthesis of AMP from IMP. In Phenylobacterium zucineum (strain HLK1), this protein is Adenylosuccinate synthetase.